Reading from the N-terminus, the 184-residue chain is ATP synthase subunit b, chloroplastic (184 aa).

Residues 31 to 53 (LINLGIVISLLIYFGKGVLSNLL) traverse the membrane as a helical segment.

This sequence belongs to the ATPase B chain family. F-type ATPases have 2 components, F(1) - the catalytic core - and F(0) - the membrane proton channel. F(1) has five subunits: alpha(3), beta(3), gamma(1), delta(1), epsilon(1). F(0) has four main subunits: a(1), b(1), b'(1) and c(10-14). The alpha and beta chains form an alternating ring which encloses part of the gamma chain. F(1) is attached to F(0) by a central stalk formed by the gamma and epsilon chains, while a peripheral stalk is formed by the delta, b and b' chains.

The protein localises to the plastid. It localises to the chloroplast thylakoid membrane. Its function is as follows. F(1)F(0) ATP synthase produces ATP from ADP in the presence of a proton or sodium gradient. F-type ATPases consist of two structural domains, F(1) containing the extramembraneous catalytic core and F(0) containing the membrane proton channel, linked together by a central stalk and a peripheral stalk. During catalysis, ATP synthesis in the catalytic domain of F(1) is coupled via a rotary mechanism of the central stalk subunits to proton translocation. Functionally, component of the F(0) channel, it forms part of the peripheral stalk, linking F(1) to F(0). The sequence is that of ATP synthase subunit b, chloroplastic from Aneura mirabilis (Parasitic liverwort).